The sequence spans 159 residues: Cyclic pyranopterin monophosphate synthase (159 aa).

Substrate contacts are provided by residues L75–H77 and M113–E114. Residue D128 is part of the active site.

It belongs to the MoaC family. As to quaternary structure, homohexamer; trimer of dimers.

The catalysed reaction is (8S)-3',8-cyclo-7,8-dihydroguanosine 5'-triphosphate = cyclic pyranopterin phosphate + diphosphate. Its pathway is cofactor biosynthesis; molybdopterin biosynthesis. Catalyzes the conversion of (8S)-3',8-cyclo-7,8-dihydroguanosine 5'-triphosphate to cyclic pyranopterin monophosphate (cPMP). The polypeptide is Cyclic pyranopterin monophosphate synthase (Serratia proteamaculans (strain 568)).